The primary structure comprises 524 residues: Bifunctional purine biosynthesis protein PurH (524 aa).

The MGS-like domain maps to 1–145; the sequence is MIKQALLSVS…KNHRDVTVIV (145 aa).

The protein belongs to the PurH family.

The catalysed reaction is (6R)-10-formyltetrahydrofolate + 5-amino-1-(5-phospho-beta-D-ribosyl)imidazole-4-carboxamide = 5-formamido-1-(5-phospho-D-ribosyl)imidazole-4-carboxamide + (6S)-5,6,7,8-tetrahydrofolate. The enzyme catalyses IMP + H2O = 5-formamido-1-(5-phospho-D-ribosyl)imidazole-4-carboxamide. The protein operates within purine metabolism; IMP biosynthesis via de novo pathway; 5-formamido-1-(5-phospho-D-ribosyl)imidazole-4-carboxamide from 5-amino-1-(5-phospho-D-ribosyl)imidazole-4-carboxamide (10-formyl THF route): step 1/1. It participates in purine metabolism; IMP biosynthesis via de novo pathway; IMP from 5-formamido-1-(5-phospho-D-ribosyl)imidazole-4-carboxamide: step 1/1. This chain is Bifunctional purine biosynthesis protein PurH, found in Cupriavidus taiwanensis (strain DSM 17343 / BCRC 17206 / CCUG 44338 / CIP 107171 / LMG 19424 / R1) (Ralstonia taiwanensis (strain LMG 19424)).